Reading from the N-terminus, the 587-residue chain is Chaperonin GroEL 1 (587 aa).

Residues 29–32 (TIGP), 86–90 (DGTTT), glycine 413, and aspartate 492 each bind ATP.

It belongs to the chaperonin (HSP60) family. In terms of assembly, forms a cylinder of 14 subunits composed of two heptameric rings stacked back-to-back. Interacts with the co-chaperonin GroES.

It localises to the cytoplasm. The enzyme catalyses ATP + H2O + a folded polypeptide = ADP + phosphate + an unfolded polypeptide.. Functionally, together with its co-chaperonin GroES, plays an essential role in assisting protein folding. The GroEL-GroES system forms a nano-cage that allows encapsulation of the non-native substrate proteins and provides a physical environment optimized to promote and accelerate protein folding. The polypeptide is Chaperonin GroEL 1 (Prochlorococcus marinus (strain MIT 9515)).